Consider the following 285-residue polypeptide: Putative sugar uptake protein lmo0169 (285 aa).

The next 10 membrane-spanning stretches (helical) occupy residues 5–24 (IALIPAVMWGIMPLVVSKIG), 31–48 (IIGTTFGALAFAIGVFIF), 53–71 (YTATIIIASFVSGAFWSLG), 84–106 (VSKTMPLSTGMQLVGTSLFGVFA), 116–135 (LVLGFSALALIIIGIFLTSY), 151–173 (IITLLISSVGYVGYVVITRWFDI), 178–195 (AILPQAIGMVVAGLLFSI), 207–226 (WLNMIPGVMWATGNLALLFS), 232–254 (IATGFSLSQMGVVISTIGGILFL), and 263–282 (LILVIIGVVLVIIGGTMIGI).

This sequence belongs to the GRP transporter (TC 2.A.7.5) family.

It is found in the cell membrane. The protein is Putative sugar uptake protein lmo0169 of Listeria monocytogenes serovar 1/2a (strain ATCC BAA-679 / EGD-e).